A 380-amino-acid polypeptide reads, in one-letter code: Apolipoprotein A-IV (380 aa).

Positions Met-1–Ala-20 are cleaved as a signal peptide. Tandem repeats lie at residues Asp-33–Leu-54, Thr-60–Val-81, Pro-82–Arg-103, Pro-115–Gly-136, Pro-137–Thr-158, Pro-159–Ala-180, Pro-181–Thr-202, Pro-203–Ala-224, Pro-225–Lys-246, Lys-247–Val-268, Pro-269–Gln-286, Lys-287–Gly-308, and Pro-309–Gly-330. The segment at Asp-33–Gly-330 is 13 X 22 AA approximate tandem repeats. Residues Lys-361 to Gly-380 form a disordered region.

The protein belongs to the apolipoprotein A1/A4/E family. In terms of assembly, homodimer. Secreted in plasma.

The protein localises to the secreted. In terms of biological role, may have a role in chylomicrons and VLDL secretion and catabolism. Required for efficient activation of lipoprotein lipase by ApoC-II; potent activator of LCAT. Apoa-IV is a major component of HDL and chylomicrons. The sequence is that of Apolipoprotein A-IV (APOA4) from Bos taurus (Bovine).